Here is a 350-residue protein sequence, read N- to C-terminus: Ferredoxin--NADP reductase (350 aa).

FAD is bound by residues Thr-25, Glu-44, Gln-52, Tyr-57, Val-97, Phe-132, Asp-298, and Ser-339.

This sequence belongs to the ferredoxin--NADP reductase type 2 family. In terms of assembly, homodimer. It depends on FAD as a cofactor.

The catalysed reaction is 2 reduced [2Fe-2S]-[ferredoxin] + NADP(+) + H(+) = 2 oxidized [2Fe-2S]-[ferredoxin] + NADPH. The chain is Ferredoxin--NADP reductase from Chlorobium limicola (strain DSM 245 / NBRC 103803 / 6330).